We begin with the raw amino-acid sequence, 200 residues long: Ras-related protein RABF2a (200 aa).

17–25 is a GTP binding site; it reads GDVGAGKSS. Residues 39-47 carry the Effector region motif; that stretch reads QESTIGAAF. GTP is bound by residues 65-69, 123-126, and 153-154; these read DTAGQ, NKAD, and SA. S-geranylgeranyl cysteine attachment occurs at residues C198 and C199.

The protein belongs to the small GTPase superfamily. Rab family. Interacts with VPS9A. Interacts with EREX (via PX domain). Binds to VPS3. High in stem, root, and inflorescence.

Its subcellular location is the endosome membrane. It localises to the prevacuolar compartment membrane. Functionally, involved in the trafficking of soluble cargo proteins from the prevacuolar compartment to the central vacuole. Involved in vacuolar transport of storage proteins with EREX as effector. Regulates membrane trafficking to protein storage vacuoles (PSVs). In Arabidopsis thaliana (Mouse-ear cress), this protein is Ras-related protein RABF2a (RABF2A).